The following is a 341-amino-acid chain: Retinol dehydrogenase 10 (341 aa).

The helical; Signal-anchor transmembrane segment at Ile-3–Ala-23 threads the bilayer. Residue Leu-40–Val-64 participates in NADP(+) binding. Ser-197 is a binding site for substrate. The Proton acceptor role is filled by Tyr-210.

This sequence belongs to the short-chain dehydrogenases/reductases (SDR) family. As to expression, detected in retinal pigment epithelium (at protein level). Detected in retina, retinal pigment epithelium, and at lower levels in cornea, liver, kidney, pancreas, lung, brain and skeletal muscle.

The protein localises to the microsome membrane. It localises to the endoplasmic reticulum membrane. It catalyses the reaction all-trans-retinol + NADP(+) = all-trans-retinal + NADPH + H(+). The protein operates within cofactor metabolism; retinol metabolism. Functionally, retinol dehydrogenase with a clear preference for NADP. Converts all-trans-retinol to all-trans-retinal. Has no detectable activity towards 11-cis-retinol, 9-cis-retinol and 13-cis-retinol. In Bos taurus (Bovine), this protein is Retinol dehydrogenase 10 (RDH10).